Consider the following 437-residue polypeptide: Ribosomal protein uS12 methylthiotransferase RimO (437 aa).

Positions 3 to 118 (KKFYITTLGC…AGKILREKFP (116 aa)) constitute an MTTase N-terminal domain. Positions 12, 48, 81, 157, 161, and 164 each coordinate [4Fe-4S] cluster. Positions 143–370 (NYSKPYAYVK…RDSHLEILEE (228 aa)) constitute a Radical SAM core domain. One can recognise a TRAM domain in the interval 373–437 (ESRIGRTYDA…YEYDMNGTWV (65 aa)).

It belongs to the methylthiotransferase family. RimO subfamily. [4Fe-4S] cluster is required as a cofactor.

The protein localises to the cytoplasm. The enzyme catalyses L-aspartate(89)-[ribosomal protein uS12]-hydrogen + (sulfur carrier)-SH + AH2 + 2 S-adenosyl-L-methionine = 3-methylsulfanyl-L-aspartate(89)-[ribosomal protein uS12]-hydrogen + (sulfur carrier)-H + 5'-deoxyadenosine + L-methionine + A + S-adenosyl-L-homocysteine + 2 H(+). Catalyzes the methylthiolation of an aspartic acid residue of ribosomal protein uS12. In Leptospira interrogans serogroup Icterohaemorrhagiae serovar copenhageni (strain Fiocruz L1-130), this protein is Ribosomal protein uS12 methylthiotransferase RimO.